The chain runs to 394 residues: ATP phosphoribosyltransferase regulatory subunit (394 aa).

The protein belongs to the class-II aminoacyl-tRNA synthetase family. HisZ subfamily. In terms of assembly, heteromultimer composed of HisG and HisZ subunits.

It is found in the cytoplasm. It functions in the pathway amino-acid biosynthesis; L-histidine biosynthesis; L-histidine from 5-phospho-alpha-D-ribose 1-diphosphate: step 1/9. In terms of biological role, required for the first step of histidine biosynthesis. May allow the feedback regulation of ATP phosphoribosyltransferase activity by histidine. The polypeptide is ATP phosphoribosyltransferase regulatory subunit (Teredinibacter turnerae (strain ATCC 39867 / T7901)).